Reading from the N-terminus, the 360-residue chain is Decorin (360 aa).

An N-terminal signal peptide occupies residues 1–16 (MKATIIFLLLAQVSWA). A propeptide spanning residues 17–30 (GPFQQRGLFDFMLE) is cleaved from the precursor. O-linked (Xyl...) (glycosaminoglycan) serine glycosylation is present at Ser34. 2 disulfide bridges follow: Cys55-Cys61 and Cys59-Cys68. LRR repeat units follow at residues 74–94 (DKVP…NNKI), 95–118 (TEIK…NNKI), 119–142 (SKIS…KNHL), 143–163 (KELP…ENEI), 164–187 (TKVR…TNPL), 188–213 (KSSG…DTNI), 214–234 (TTIP…GNKI), 235–258 (TKVD…FNSI), 259–282 (SAVD…NNKL), 283–305 (IRVP…NNNI), 306–335 (SAVG…SNPV), and 336–360 (QYWE…GNYK). An N-linked (GlcNAc...) asparagine glycan is attached at Asn212. N-linked (GlcNAc...) asparagine glycosylation is found at Asn263 and Asn304. Cys314 and Cys347 are oxidised to a cystine.

It belongs to the small leucine-rich proteoglycan (SLRP) family. SLRP class I subfamily. As to quaternary structure, binds to type I and type II collagen, fibronectin and TGF-beta. Forms a ternary complex with MFAP2 and ELN. Interacts with DPT. The attached glycosaminoglycan chain can be either chondroitin sulfate or dermatan sulfate depending upon the tissue of origin.

The protein localises to the secreted. The protein resides in the extracellular space. It is found in the extracellular matrix. Functionally, may affect the rate of fibrils formation. This is Decorin (DCN) from Canis lupus familiaris (Dog).